The sequence spans 184 residues: NADH-quinone oxidoreductase subunit B (184 aa).

The [4Fe-4S] cluster site is built by C37, C38, C103, and C132.

It belongs to the complex I 20 kDa subunit family. NDH-1 is composed of 14 different subunits. Subunits NuoB, C, D, E, F, and G constitute the peripheral sector of the complex. [4Fe-4S] cluster serves as cofactor.

It localises to the cell membrane. The enzyme catalyses a quinone + NADH + 5 H(+)(in) = a quinol + NAD(+) + 4 H(+)(out). Functionally, NDH-1 shuttles electrons from NADH, via FMN and iron-sulfur (Fe-S) centers, to quinones in the respiratory chain. The immediate electron acceptor for the enzyme in this species is believed to be a menaquinone. Couples the redox reaction to proton translocation (for every two electrons transferred, four hydrogen ions are translocated across the cytoplasmic membrane), and thus conserves the redox energy in a proton gradient. The polypeptide is NADH-quinone oxidoreductase subunit B (Beutenbergia cavernae (strain ATCC BAA-8 / DSM 12333 / CCUG 43141 / JCM 11478 / NBRC 16432 / NCIMB 13614 / HKI 0122)).